Reading from the N-terminus, the 941-residue chain is ATP-dependent 6-phosphofructokinase subunit beta (941 aa).

An N-terminal catalytic PFK domain 1 region spans residues 2-558 (PDASLFNGTS…HMKNFISTNS (557 aa)). Residues Gly-191, 255–256 (RC), and 285–288 (GDGS) contribute to the ATP site. Asp-286 contributes to the Mg(2+) binding site. Beta-D-fructose 6-phosphate-binding positions include 331–333 (SID), Arg-368, 375–377 (MGR), Glu-432, Arg-460, and 466–469 (HVQR). Asp-333 acts as the Proton acceptor in catalysis. Residues 559-572 (ADHVPPSLPLEKRK) form an interdomain linker region. Positions 573 to 941 (KVAIINVGAP…SDMLSGRTSL (369 aa)) are C-terminal regulatory PFK domain 2. Residues Arg-643, 701 to 705 (TISNN), Arg-739, 746 to 748 (QGG), Glu-806, Lys-832, 838 to 841 (HVQQ), and Arg-918 contribute to the beta-D-fructose 2,6-bisphosphate site.

The protein belongs to the phosphofructokinase type A (PFKA) family. ATP-dependent PFK group I subfamily. Eukaryotic two domain clade 'E' sub-subfamily. In terms of assembly, heterododecamer of 4 alpha, 4 beta and 4 gamma chains. The gamma chain bridges the N-terminal halves of the alpha and beta subunits. Mg(2+) serves as cofactor.

The protein localises to the cytoplasm. It catalyses the reaction beta-D-fructose 6-phosphate + ATP = beta-D-fructose 1,6-bisphosphate + ADP + H(+). Its pathway is carbohydrate degradation; glycolysis; D-glyceraldehyde 3-phosphate and glycerone phosphate from D-glucose: step 3/4. Its activity is regulated as follows. Allosterically activated by ADP, AMP, or fructose 2,6-bisphosphate, and allosterically inhibited by ATP or citrate. Functionally, catalyzes the phosphorylation of D-fructose 6-phosphate to fructose 1,6-bisphosphate by ATP, the first committing step of glycolysis. The protein is ATP-dependent 6-phosphofructokinase subunit beta (PFK2) of Komagataella phaffii (strain GS115 / ATCC 20864) (Yeast).